Reading from the N-terminus, the 439-residue chain is Methylenetetrahydrofolate--tRNA-(uracil-5-)-methyltransferase TrmFO (439 aa).

An FAD-binding site is contributed by 8-13 (GAGLAG).

This sequence belongs to the MnmG family. TrmFO subfamily. FAD is required as a cofactor.

The protein resides in the cytoplasm. It catalyses the reaction uridine(54) in tRNA + (6R)-5,10-methylene-5,6,7,8-tetrahydrofolate + NADH + H(+) = 5-methyluridine(54) in tRNA + (6S)-5,6,7,8-tetrahydrofolate + NAD(+). It carries out the reaction uridine(54) in tRNA + (6R)-5,10-methylene-5,6,7,8-tetrahydrofolate + NADPH + H(+) = 5-methyluridine(54) in tRNA + (6S)-5,6,7,8-tetrahydrofolate + NADP(+). Catalyzes the folate-dependent formation of 5-methyl-uridine at position 54 (M-5-U54) in all tRNAs. The protein is Methylenetetrahydrofolate--tRNA-(uracil-5-)-methyltransferase TrmFO of Lacticaseibacillus paracasei (strain ATCC 334 / BCRC 17002 / CCUG 31169 / CIP 107868 / KCTC 3260 / NRRL B-441) (Lactobacillus paracasei).